The following is a 393-amino-acid chain: NAD(P)H-quinone oxidoreductase subunit H, chloroplastic (393 aa).

It belongs to the complex I 49 kDa subunit family. In terms of assembly, NDH is composed of at least 16 different subunits, 5 of which are encoded in the nucleus.

The protein localises to the plastid. It localises to the chloroplast thylakoid membrane. It catalyses the reaction a plastoquinone + NADH + (n+1) H(+)(in) = a plastoquinol + NAD(+) + n H(+)(out). It carries out the reaction a plastoquinone + NADPH + (n+1) H(+)(in) = a plastoquinol + NADP(+) + n H(+)(out). Functionally, NDH shuttles electrons from NAD(P)H:plastoquinone, via FMN and iron-sulfur (Fe-S) centers, to quinones in the photosynthetic chain and possibly in a chloroplast respiratory chain. The immediate electron acceptor for the enzyme in this species is believed to be plastoquinone. Couples the redox reaction to proton translocation, and thus conserves the redox energy in a proton gradient. This chain is NAD(P)H-quinone oxidoreductase subunit H, chloroplastic, found in Psilotum nudum (Whisk fern).